The following is a 133-amino-acid chain: Small ribosomal subunit protein uS11 (133 aa).

The protein belongs to the universal ribosomal protein uS11 family. In terms of assembly, part of the 30S ribosomal subunit. Interacts with proteins S7 and S18. Binds to IF-3.

Located on the platform of the 30S subunit, it bridges several disparate RNA helices of the 16S rRNA. Forms part of the Shine-Dalgarno cleft in the 70S ribosome. This Ralstonia nicotianae (strain ATCC BAA-1114 / GMI1000) (Ralstonia solanacearum) protein is Small ribosomal subunit protein uS11.